A 421-amino-acid chain; its full sequence is 3-isopropylmalate dehydratase large subunit (421 aa).

[4Fe-4S] cluster-binding residues include C302, C362, and C365.

This sequence belongs to the aconitase/IPM isomerase family. LeuC type 2 subfamily. As to quaternary structure, heterodimer of LeuC and LeuD. It depends on [4Fe-4S] cluster as a cofactor.

The catalysed reaction is (2R,3S)-3-isopropylmalate = (2S)-2-isopropylmalate. It participates in amino-acid biosynthesis; L-leucine biosynthesis; L-leucine from 3-methyl-2-oxobutanoate: step 2/4. Functionally, catalyzes the isomerization between 2-isopropylmalate and 3-isopropylmalate, via the formation of 2-isopropylmaleate. The protein is 3-isopropylmalate dehydratase large subunit of Campylobacter curvus (strain 525.92).